The following is a 429-amino-acid chain: Histidine--tRNA ligase (429 aa).

Belongs to the class-II aminoacyl-tRNA synthetase family. In terms of assembly, homodimer.

Its subcellular location is the cytoplasm. The enzyme catalyses tRNA(His) + L-histidine + ATP = L-histidyl-tRNA(His) + AMP + diphosphate + H(+). This is Histidine--tRNA ligase from Stutzerimonas stutzeri (strain A1501) (Pseudomonas stutzeri).